Reading from the N-terminus, the 784-residue chain is Endonuclease MutS2 (784 aa).

335 to 342 (GPNTGGKT) contributes to the ATP binding site. The Smr domain occupies 709–784 (LDLRGERYED…GTGVTIVELK (76 aa)).

It belongs to the DNA mismatch repair MutS family. MutS2 subfamily. As to quaternary structure, homodimer. Binds to stalled ribosomes, contacting rRNA.

Its function is as follows. Endonuclease that is involved in the suppression of homologous recombination and thus may have a key role in the control of bacterial genetic diversity. Functionally, acts as a ribosome collision sensor, splitting the ribosome into its 2 subunits. Detects stalled/collided 70S ribosomes which it binds and splits by an ATP-hydrolysis driven conformational change. Acts upstream of the ribosome quality control system (RQC), a ribosome-associated complex that mediates the extraction of incompletely synthesized nascent chains from stalled ribosomes and their subsequent degradation. Probably generates substrates for RQC. In Geobacillus sp. (strain WCH70), this protein is Endonuclease MutS2.